The primary structure comprises 503 residues: Cobyric acid synthase (503 aa).

The GATase cobBQ-type domain occupies 245 to 447; the sequence is DISIAIIRLP…LHGIFDEISL (203 aa). The active-site Nucleophile is the Cys-326. His-439 is an active-site residue.

The protein belongs to the CobB/CobQ family. CobQ subfamily.

Its pathway is cofactor biosynthesis; adenosylcobalamin biosynthesis. In terms of biological role, catalyzes amidations at positions B, D, E, and G on adenosylcobyrinic A,C-diamide. NH(2) groups are provided by glutamine, and one molecule of ATP is hydrogenolyzed for each amidation. This chain is Cobyric acid synthase, found in Alkaliphilus metalliredigens (strain QYMF).